The sequence spans 346 residues: Histidinol-phosphate aminotransferase (346 aa).

The residue at position 209 (lysine 209) is an N6-(pyridoxal phosphate)lysine.

Belongs to the class-II pyridoxal-phosphate-dependent aminotransferase family. Histidinol-phosphate aminotransferase subfamily. As to quaternary structure, homodimer. Pyridoxal 5'-phosphate serves as cofactor.

The enzyme catalyses L-histidinol phosphate + 2-oxoglutarate = 3-(imidazol-4-yl)-2-oxopropyl phosphate + L-glutamate. Its pathway is amino-acid biosynthesis; L-histidine biosynthesis; L-histidine from 5-phospho-alpha-D-ribose 1-diphosphate: step 7/9. This is Histidinol-phosphate aminotransferase from Vibrio campbellii (strain ATCC BAA-1116).